The chain runs to 200 residues: Outer-membrane lipoprotein carrier protein (200 aa).

Positions M1–A18 are cleaved as a signal peptide.

It belongs to the LolA family. In terms of assembly, monomer.

It localises to the periplasm. Functionally, participates in the translocation of lipoproteins from the inner membrane to the outer membrane. Only forms a complex with a lipoprotein if the residue after the N-terminal Cys is not an aspartate (The Asp acts as a targeting signal to indicate that the lipoprotein should stay in the inner membrane). The protein is Outer-membrane lipoprotein carrier protein of Idiomarina loihiensis (strain ATCC BAA-735 / DSM 15497 / L2-TR).